The chain runs to 1338 residues: Aldehyde oxidase 1 (1338 aa).

Residues Ser5–Ile92 form the 2Fe-2S ferredoxin-type domain. Residues Gln113 and Cys151 each coordinate Mo-molybdopterin. An FAD-binding PCMH-type domain is found at Phe236 to Lys421. FAD-binding positions include Val264–Val271, Ala345, Ser354, His358, Asp367, and Leu411. Mo-molybdopterin contacts are provided by residues Ala806–Phe807 and Met1047. Ser1068 carries the post-translational modification Phosphoserine. Mo-molybdopterin is bound by residues Gly1088–Val1091, Gln1203, and Leu1268. Catalysis depends on Glu1270, which acts as the Proton acceptor; for azaheterocycle hydroxylase activity.

The protein belongs to the xanthine dehydrogenase family. Homodimer. The cofactor is [2Fe-2S] cluster. FAD serves as cofactor. Requires Mo-molybdopterin as cofactor. In terms of tissue distribution, detected at high levels in liver, also detected in lung, kidney, lacrimal gland and olfactory mucosa.

The protein resides in the cytoplasm. The enzyme catalyses an aldehyde + O2 + H2O = a carboxylate + H2O2 + H(+). It carries out the reaction retinal + O2 + H2O = retinoate + H2O2 + H(+). Oxidase with broad substrate specificity, oxidizing aromatic azaheterocycles, such as N1-methylnicotinamide, N-methylphthalazinium and phthalazine, as well as aldehydes, such as benzaldehyde, retinal, pyridoxal, and vanillin. Plays a key role in the metabolism of xenobiotics and drugs containing aromatic azaheterocyclic substituents. Participates in the bioactivation of prodrugs such as famciclovir, catalyzing the oxidation step from 6-deoxypenciclovir to penciclovir, which is a potent antiviral agent. Is probably involved in the regulation of reactive oxygen species homeostasis. May be a prominent source of superoxide generation via the one-electron reduction of molecular oxygen. May also catalyze nitric oxide (NO) production via the reduction of nitrite to NO with NADH or aldehyde as electron donor. May play a role in adipogenesis. In Macaca fascicularis (Crab-eating macaque), this protein is Aldehyde oxidase 1 (AOX1).